The chain runs to 421 residues: MTESVLDYMSRLGRDARAASRLLARAATAQKNRALLAAADALDAARAELSHANEQDLAAGRANGLEPAMLDRLALTPARIDDMIEGLRQVATLPDPIGEIRDMRYVPSGIQIGKMRVPLGVVGIIYESRPNVTIDAASLCLKSGNATILRGGSEAIHSNQAIARCIQQGLAEAGLPAAAVQVVETTDRAAVGALISMPEYVDVIVPRGGKGLIERISREAKVPVIKHLDGICHVYIDVAADLDKAIRVADNAKTQRYAPCNTMETLLVHAGIAERALPPLATIYREKGVELRGDAATRALLGADVLEATEEDWRTEYNAPILSIRIVDGLDAAIEHINTYGSQHTDAIITENFSDARRFLAEVDSASVMVNASTRFADGFEYGLGAEIGISTDKLHARGPVGLEGLTSEKYVVFGDGHVRT.

This sequence belongs to the gamma-glutamyl phosphate reductase family.

Its subcellular location is the cytoplasm. The catalysed reaction is L-glutamate 5-semialdehyde + phosphate + NADP(+) = L-glutamyl 5-phosphate + NADPH + H(+). Its pathway is amino-acid biosynthesis; L-proline biosynthesis; L-glutamate 5-semialdehyde from L-glutamate: step 2/2. In terms of biological role, catalyzes the NADPH-dependent reduction of L-glutamate 5-phosphate into L-glutamate 5-semialdehyde and phosphate. The product spontaneously undergoes cyclization to form 1-pyrroline-5-carboxylate. This is Gamma-glutamyl phosphate reductase from Pseudomonas aeruginosa (strain UCBPP-PA14).